We begin with the raw amino-acid sequence, 378 residues long: Branched-chain-amino-acid aminotransferase (378 aa).

Lys-213 bears the N6-(pyridoxal phosphate)lysine mark.

This sequence belongs to the class-IV pyridoxal-phosphate-dependent aminotransferase family. In terms of assembly, homodimer. The cofactor is pyridoxal 5'-phosphate.

It carries out the reaction L-leucine + 2-oxoglutarate = 4-methyl-2-oxopentanoate + L-glutamate. The catalysed reaction is L-isoleucine + 2-oxoglutarate = (S)-3-methyl-2-oxopentanoate + L-glutamate. It catalyses the reaction L-valine + 2-oxoglutarate = 3-methyl-2-oxobutanoate + L-glutamate. In terms of biological role, catalyzes the first reaction in the catabolism of the essential branched chain amino acids leucine, isoleucine, and valine. The polypeptide is Branched-chain-amino-acid aminotransferase (bcaA) (Dictyostelium discoideum (Social amoeba)).